A 248-amino-acid chain; its full sequence is UPF0280 protein Maeo_0343 (248 aa).

This sequence belongs to the UPF0280 family.

The protein is UPF0280 protein Maeo_0343 of Methanococcus aeolicus (strain ATCC BAA-1280 / DSM 17508 / OCM 812 / Nankai-3).